Consider the following 476-residue polypeptide: Proline--tRNA ligase (476 aa).

It belongs to the class-II aminoacyl-tRNA synthetase family. ProS type 3 subfamily. Homodimer.

It is found in the cytoplasm. It carries out the reaction tRNA(Pro) + L-proline + ATP = L-prolyl-tRNA(Pro) + AMP + diphosphate. In terms of biological role, catalyzes the attachment of proline to tRNA(Pro) in a two-step reaction: proline is first activated by ATP to form Pro-AMP and then transferred to the acceptor end of tRNA(Pro). This chain is Proline--tRNA ligase, found in Rubrobacter xylanophilus (strain DSM 9941 / JCM 11954 / NBRC 16129 / PRD-1).